The following is a 59-amino-acid chain: Large ribosomal subunit protein bL32 (59 aa).

Basic residues predominate over residues 1–15; it reads MAVPKRKTSKSKRDM. Residues 1–21 form a disordered region; the sequence is MAVPKRKTSKSKRDMRRASNS.

Belongs to the bacterial ribosomal protein bL32 family.

This chain is Large ribosomal subunit protein bL32, found in Alkaliphilus metalliredigens (strain QYMF).